Here is a 449-residue protein sequence, read N- to C-terminus: Phosphoglucosamine mutase (449 aa).

Catalysis depends on Ser101, which acts as the Phosphoserine intermediate. Mg(2+) is bound by residues Ser101, Asp241, Asp243, and Asp245. The residue at position 101 (Ser101) is a Phosphoserine.

This sequence belongs to the phosphohexose mutase family. It depends on Mg(2+) as a cofactor. In terms of processing, activated by phosphorylation.

It carries out the reaction alpha-D-glucosamine 1-phosphate = D-glucosamine 6-phosphate. Catalyzes the conversion of glucosamine-6-phosphate to glucosamine-1-phosphate. This chain is Phosphoglucosamine mutase, found in Alkaliphilus oremlandii (strain OhILAs) (Clostridium oremlandii (strain OhILAs)).